The following is a 109-amino-acid chain: Iron-sulfur cluster assembly protein CyaY (109 aa).

The protein belongs to the frataxin family.

Its function is as follows. Involved in iron-sulfur (Fe-S) cluster assembly. May act as a regulator of Fe-S biogenesis. This chain is Iron-sulfur cluster assembly protein CyaY, found in Bordetella pertussis (strain Tohama I / ATCC BAA-589 / NCTC 13251).